A 396-amino-acid chain; its full sequence is L-lactate dehydrogenase (396 aa).

The FMN hydroxy acid dehydrogenase domain occupies 1–380 (MIISAASDYR…SGDSLVQELG (380 aa)). Tyr24 provides a ligand contact to substrate. FMN is bound by residues Ser106 and Gln127. Tyr129 lines the substrate pocket. Thr155 contacts FMN. Residue Arg164 participates in substrate binding. Lys251 provides a ligand contact to FMN. The active-site Proton acceptor is His275. Position 278 (Arg278) interacts with substrate. Residue 306–330 (DSGIRNGLDVVRMIALGADTVLLGR) participates in FMN binding.

Belongs to the FMN-dependent alpha-hydroxy acid dehydrogenase family. The cofactor is FMN.

Its subcellular location is the cell inner membrane. It carries out the reaction (S)-lactate + A = pyruvate + AH2. In terms of biological role, catalyzes the conversion of L-lactate to pyruvate. Is coupled to the respiratory chain. The sequence is that of L-lactate dehydrogenase from Salmonella schwarzengrund (strain CVM19633).